The chain runs to 178 residues: Small ribosomal subunit protein uS7c (178 aa).

The segment covering 137–146 (QKKEEIEKSK) has biased composition (basic and acidic residues). The interval 137 to 178 (QKKEEIEKSKSPVNNNKKFISKNKKSKNKKQKKRLKRKKNIY) is disordered. Over residues 155–178 (FISKNKKSKNKKQKKRLKRKKNIY) the composition is skewed to basic residues.

This sequence belongs to the universal ribosomal protein uS7 family. In terms of assembly, part of the 30S ribosomal subunit.

It localises to the plastid. In terms of biological role, one of the primary rRNA binding proteins, it binds directly to 16S rRNA where it nucleates assembly of the head domain of the 30S subunit. This is Small ribosomal subunit protein uS7c (rps7) from Euglena longa (Euglenophycean alga).